Consider the following 537-residue polypeptide: MKIAIEGCAHGELERIYDTIACIEKESNTKIDLLLCCGDFQSTRNLEDLQTMAVPKKYLDICTFYKYYSGECVAPVLTIFIGGNHEASNYLQELPYGGWVAPNIYYLGYAGVVNVNGVRIAGISGIYKGHDFLRGHHEFPPYTESTCRSVYHVRQLEVFRLKQLSGKIDIFLSHDWPTGIYEYGNKAQLLRKKPYFAADMESGQLGSRPLEELLKAVQPSYWFAAHLHCKFAALVPHQNATKAPTKMGDGSSSSSSSSSSESDDEESTSRLPPKPVAVTKFLALDKCLPRRAFLQVLDIPSEAIEGNPTFEYDAEWLVILQSTNHLISVKENYYYLPGKKAGAIAERFNFTPTEEELDSLTTKFQSLKIPENFQRTVPAFDPQEQSNYKHMVVGQPTAHLNPQSNTFCSVLGVDDPLCLALLANGKDLPAVADQCQDQEPIEGSSPPPEPLVTPSKRKLNLFLPAPTVTADATAAEKDDSVIDLPEEDEDPKTAETAESEAVDNPKVKAVPPPPSSPPSVKKLKRRNQNIYQAEDDD.

4 residues coordinate a divalent metal cation: cysteine 8, histidine 10, aspartate 39, and asparagine 84. The lariat recognition loop stretch occupies residues 124-154; the sequence is SGIYKGHDFLRGHHEFPPYTESTCRSVYHVR. 3 residues coordinate a divalent metal cation: histidine 174, histidine 226, and histidine 228. Disordered regions lie at residues 242–272 and 473–537; these read KAPT…SRLP and TAAE…EDDD. The segment covering 251–260 has biased composition (low complexity); that stretch reads SSSSSSSSSS.

This sequence belongs to the lariat debranching enzyme family. The cofactor is Fe(2+). It depends on Zn(2+) as a cofactor. Mn(2+) is required as a cofactor.

The protein localises to the nucleus. Its activity is regulated as follows. Active in presence of diverse metals including Fe(2+), Zn(2+), Mn(2+). Binds two metal cations in two adjacent alpha and beta metal-binding pockets. Its function is as follows. Cleaves the 2'-5' phosphodiester linkage at the branch point of lariat intron pre-mRNAs after splicing and converts them into linear molecules that are subsequently degraded. It thereby facilitates ribonucleotide turnover. The polypeptide is Lariat debranching enzyme (DBR1) (Drosophila pseudoobscura pseudoobscura (Fruit fly)).